The chain runs to 300 residues: Folate-binding protein 1 (300 aa).

The signal sequence occupies residues 1-28; that stretch reads MGRCLTKKVFLIQSPILFLHLLISLSSG. Disulfide bonds link Cys38–Cys76, Cys68–Cys111, Cys77–Cys114, Cys102–Cys139, and Cys132–Cys178. A glycan (N-linked (GlcNAc...) asparagine) is linked at Asn173. A helical membrane pass occupies residues 238–258; that stretch reads MTTIQKISLGMSFLIAGMFLI.

This sequence belongs to the folate receptor family. Expressed in leaves.

The protein resides in the membrane. Folic acid-binding protein involved in salicylic acid- (SA-) induced folate accumulation by triggering uptake and accumulation of folic acid in cells. May be implicated in the transport of the folates from the site of production (leaves) to the site of storage (fruits and seeds) and utilization (roots). This is Folate-binding protein 1 from Arabidopsis thaliana (Mouse-ear cress).